The sequence spans 95 residues: Beta-defensin 132 (95 aa).

The signal sequence occupies residues 1–22; sequence MKFLLLVLAALRFLTQVIPASA. Intrachain disulfides connect Cys27–Cys55, Cys35–Cys49, and Cys39–Cys56. Residues 72 to 95 are disordered; sequence GNHWQSRRRNTQRKDKKQQTTVTS. Basic residues predominate over residues 76 to 87; that stretch reads QSRRRNTQRKDK.

The protein belongs to the beta-defensin family.

Its subcellular location is the secreted. Has antibacterial activity. This is Beta-defensin 132 (DEFB132) from Pongo pygmaeus (Bornean orangutan).